The chain runs to 932 residues: Isoleucine--tRNA ligase (932 aa).

A 'HIGH' region motif is present at residues 59-69 (PYANGTIHIGH). E562 contributes to the L-isoleucyl-5'-AMP binding site. Positions 603-607 (KMSKS) match the 'KMSKS' region motif. Residue K606 participates in ATP binding. Zn(2+)-binding residues include C899, C902, C915, and C918.

This sequence belongs to the class-I aminoacyl-tRNA synthetase family. IleS type 1 subfamily. In terms of assembly, monomer. Zn(2+) is required as a cofactor.

The protein localises to the cytoplasm. The catalysed reaction is tRNA(Ile) + L-isoleucine + ATP = L-isoleucyl-tRNA(Ile) + AMP + diphosphate. Catalyzes the attachment of isoleucine to tRNA(Ile). As IleRS can inadvertently accommodate and process structurally similar amino acids such as valine, to avoid such errors it has two additional distinct tRNA(Ile)-dependent editing activities. One activity is designated as 'pretransfer' editing and involves the hydrolysis of activated Val-AMP. The other activity is designated 'posttransfer' editing and involves deacylation of mischarged Val-tRNA(Ile). This is Isoleucine--tRNA ligase from Pasteurella multocida (strain Pm70).